We begin with the raw amino-acid sequence, 213 residues long: AN1-type zinc finger protein 5 (213 aa).

The A20-type zinc-finger motif lies at 8–42 (TPGPMLCSTGCGFYGNPRTNGMCSVCYKEHLQRQQ). Residues Cys14, Cys18, Cys30, and Cys33 each coordinate Zn(2+). Positions 39-149 (QRQQNSGRMS…EEKAPELPKP (111 aa)) are disordered. Over residues 40-66 (RQQNSGRMSPMGTASGSNSPTSDSASV) the composition is skewed to polar residues. Residues Ser48 and Ser58 each carry the phosphoserine modification. A compositionally biased stretch (low complexity) spans 120–138 (SEPVVTQPSPSVSQPSSSQ). The segment covering 139-148 (SEEKAPELPK) has biased composition (basic and acidic residues). The AN1-type zinc-finger motif lies at 148–194 (KPKKNRCFMCRKKVGLTGFDCRCGNLFCGLHRYSDKHNCPYDYKAEA). Positions 154, 157, 168, 170, 175, 178, 184, and 186 each coordinate Zn(2+). The residue at position 209 (Lys209) is an N6-acetyllysine.

As to quaternary structure, homooligomer and/or heterooligomer. Interacts (via A20-type domain) with IKBKG and RIPK1 and with TRAF6 (via AN1-type domain). Interacts with ubiquitin and polyubiquitinated proteins. Identified in a heterotrimeric complex with ubiquitin and SQSTM1, where ZFAND5 and SQSTM1 both interact with the same ubiquitin molecule.

The protein localises to the cytoplasm. Functionally, involved in protein degradation via the ubiquitin-proteasome system. May act by anchoring ubiquitinated proteins to the proteasome. Plays a role in ubiquitin-mediated protein degradation during muscle atrophy. Plays a role in the regulation of NF-kappa-B activation and apoptosis. Inhibits NF-kappa-B activation triggered by overexpression of RIPK1 and TRAF6 but not of RELA. Also inhibits tumor necrosis factor (TNF), IL-1 and TLR4-induced NF-kappa-B activation in a dose-dependent manner. Overexpression sensitizes cells to TNF-induced apoptosis. Is a potent inhibitory factor for osteoclast differentiation. The sequence is that of AN1-type zinc finger protein 5 (Zfand5) from Rattus norvegicus (Rat).